The primary structure comprises 1030 residues: ADAMTS-like protein 4 (1030 aa).

The signal sequence occupies residues 1–24 (MELWLGRLWLYVMLLLLLLQLCQD). Residues 47–91 (GPWGRWASCSQPCGVGVQRRSRTCELHPALSLPPRPPRHPEAPQP) form the TSP type-1 1 domain. Disordered stretches follow at residues 73-150 (HPAL…KPGM) and 168-306 (LAHK…LPLT). Composition is skewed to polar residues over residues 176 to 186 (KDSSTAEETLP), 211 to 237 (QSRS…SSAP), and 245 to 257 (PTSS…SFQG). N451 and N731 each carry an N-linked (GlcNAc...) asparagine glycan. TSP type-1 domains follow at residues 681 to 740 (CPPY…QLRL), 741 to 800 (CGHW…GPCT), 803 to 865 (WFYS…GPCE), 866 to 925 (KTWR…QGQA), and 926 to 982 (CEDQ…QPCN). A PLAC domain is found at 985 to 1022 (PDDQCKDSSPHCPLVVQARLCVYPYYTATCCRSCAHVL).

In terms of assembly, interacts with CTSB. Interacts with FBN1. Glycosylated. Can be O-fucosylated by POFUT2 on a serine or a threonine residue found within the consensus sequence C1-X(2)-(S/T)-C2-G of the TSP type-1 repeat domains where C1 and C2 are the first and second cysteine residue of the repeat, respectively. Fucosylated repeats can then be further glycosylated by the addition of a beta-1,3-glucose residue by the glucosyltransferase, B3GALTL. Fucosylation mediates the efficient secretion of ADAMTS family members. Can also be C-glycosylated with one or two mannose molecules on tryptophan residues within the consensus sequence W-X-X-W of the TPRs, and N-glycosylated. These other glycosylations can also facilitate secretion.

Its subcellular location is the secreted. It is found in the extracellular space. It localises to the extracellular matrix. Positive regulation of apoptosis. May facilitate FBN1 microfibril biogenesis. In Rattus norvegicus (Rat), this protein is ADAMTS-like protein 4.